The primary structure comprises 365 residues: 3-isopropylmalate dehydrogenase (365 aa).

The substrate site is built by Arg-96, Arg-106, Arg-134, and Asp-224. 3 residues coordinate Mg(2+): Asp-224, Asp-248, and Asp-252. 288–300 lines the NAD(+) pocket; sequence GSAPTIAKQNIAN.

Belongs to the isocitrate and isopropylmalate dehydrogenases family. LeuB type 1 subfamily. In terms of assembly, homodimer. Mg(2+) serves as cofactor. The cofactor is Mn(2+).

Its subcellular location is the cytoplasm. The catalysed reaction is (2R,3S)-3-isopropylmalate + NAD(+) = 4-methyl-2-oxopentanoate + CO2 + NADH. The protein operates within amino-acid biosynthesis; L-leucine biosynthesis; L-leucine from 3-methyl-2-oxobutanoate: step 3/4. Its function is as follows. Catalyzes the oxidation of 3-carboxy-2-hydroxy-4-methylpentanoate (3-isopropylmalate) to 3-carboxy-4-methyl-2-oxopentanoate. The product decarboxylates to 4-methyl-2 oxopentanoate. The chain is 3-isopropylmalate dehydrogenase from Dehalococcoides mccartyi (strain CBDB1).